The following is a 386-amino-acid chain: HORMA domain-containing protein 1 (386 aa).

The region spanning 24-224 (TQSLILVKRL…TPFHVLKVKV (201 aa)) is the HORMA domain. Disordered stretches follow at residues 237 to 274 (SIFKKQASKQPQTDEEKPDLSINDDLAQDNNGDRKRDD) and 289 to 386 (EDGN…TPLN). Residues 289–313 (EDGNLQSDDSQNSALADSQEKTSQA) show a composition bias toward polar residues. Basic and acidic residues predominate over residues 329 to 343 (QKPDLELKNQKESAR).

It is found in the nucleus. The protein resides in the chromosome. In terms of biological role, plays a key role in meiotic progression by ensuring that sufficient numbers of processed DNA double-strand breaks (DSBs) are available for successful homology search, promoting synaptonemal-complex formation independently and playing key role in the male mid-pachytene checkpoint and the female meiotic prophase checkpoint. The sequence is that of HORMA domain-containing protein 1 (hormad1) from Xenopus laevis (African clawed frog).